Here is an 852-residue protein sequence, read N- to C-terminus: Kinesin-like protein KIF18B (852 aa).

The Kinesin motor domain maps to 7–351 (TLQVVVRVRP…LKYADRAKEI (345 aa)). ATP is bound at residue 109-116 (GATGAGKT). The stretch at 366–393 (ISQYATICQQLQAEVAALRKKLQVYEGG) forms a coiled coil. Disordered stretches follow at residues 390–424 (YEGG…PAGP) and 437–485 (QVER…RLTL). Residue serine 404 is modified to Phosphoserine. Residue threonine 417 is modified to Phosphothreonine. The span at 451–461 (QSPEDEDEGPA) shows a compositional bias: acidic residues. Phosphoserine occurs at positions 452, 480, and 558. 2 disordered regions span residues 575 to 594 (IPVP…PVTR) and 602 to 689 (GPLH…SPRV). The span at 577 to 588 (VPSPLCPEPPGY) shows a compositional bias: pro residues. Residues 624-632 (PMEKKRRRP) carry the Nuclear localization signal motif. Phosphoserine is present on residues serine 633 and serine 639. Residues 653-656 (SFLP) carry the MAPRE1-binding motif. Serine 662 is subject to Phosphoserine. The segment covering 664-673 (PDTQPSQGPS) has biased composition (polar residues). Position 674 is a phosphothreonine (threonine 674). Residues 711–736 (TPLALPTRDLNATFDLSEEPPSKPSF) form a KIF2C-binding region. The interval 767-798 (MKGPKPTSSLPGTSACKKKRVASSSVSHGRSR) is disordered. 2 consecutive short sequence motifs (MAPRE1-binding) follow at residues 774-777 (SSLP) and 800-803 (ARLP). The residue at position 822 (serine 822) is a Phosphoserine.

Belongs to the TRAFAC class myosin-kinesin ATPase superfamily. Kinesin family. Interacts with MAPRE1; this interaction is required for efficient accumulation at microtubule plus ends. Interacts with KIF2C at microtubule tips; this interaction increases the affinity of both partners for microtubule plus ends and is required for robust microtubule depolymerization. KIF2C phosphorylation by AURKA or AURKB strongly reduces KIF18B-binding. In terms of tissue distribution, shows a prominent expression in the amygdala.

Its subcellular location is the nucleus. It localises to the cytoplasm. The protein resides in the cytoskeleton. In complex with KIF2C, constitutes the major microtubule plus-end depolymerizing activity in mitotic cells. Its major role may be to transport KIF2C and/or MAPRE1 along microtubules. The protein is Kinesin-like protein KIF18B (KIF18B) of Homo sapiens (Human).